Reading from the N-terminus, the 192-residue chain is MDGSGEQPRGGGPTSSEQIMKTGALLLQGFIQDRAGRMGGEAPELALDPVPQDASTKKLSECLKRIGDELDSNMELQRMIAAVDTDSPREVFFRVAADMFSDGNFNWGRVVALFYFASKLVLKALCTKVPELIRTIMGWTLDFLRERLLGWIQDQGGWDGLLSYFGTPTWQTVTIFVAGVLTASLTIWKKMG.

M1 carries the post-translational modification N-acetylmethionine. Residues 59–73 carry the BH3 motif; that stretch reads LSECLKRIGDELDSN. A BH1 motif is present at residues 98-118; that stretch reads DMFSDGNFNWGRVVALFYFAS. K128 is covalently cross-linked (Glycyl lysine isopeptide (Lys-Gly) (interchain with G-Cter in ubiquitin)). The BH2 signature appears at 150 to 165; sequence GWIQDQGGWDGLLSYF. Residues 172–192 form a helical membrane-spanning segment; sequence TVTIFVAGVLTASLTIWKKMG. Residue K190 forms a Glycyl lysine isopeptide (Lys-Gly) (interchain with G-Cter in ubiquitin) linkage.

Belongs to the Bcl-2 family. As to quaternary structure, homodimer. Forms higher oligomers under stress conditions. Forms heterooligomers with BAK. Interacts with BCL2L11. Interaction with BCL2L11 promotes BAX oligomerization and association with mitochondrial membranes, with subsequent release of cytochrome c. Forms heterodimers with BCL2, BCL2L1 isoform Bcl-X(L), BCL2L2, MCL1 and A1. Interacts with SH3GLB1. Interacts with humanin; forms fibers with humanin which results in BAX conformational changes and sequestering of BAX into the fibers, preventing BAX activation. Interacts with SFN and YWHAZ; the interaction occurs in the cytoplasm. Under stress conditions, JNK-mediated phosphorylation of SFN and YWHAZ, releases BAX to mitochondria. Interacts with RNF144B, which regulates the ubiquitin-dependent stability of BAX. Interacts with CLU under stress conditions that cause a conformation change leading to BAX oligomerization and association with mitochondria. Does not interact with CLU in unstressed cells. Interacts with FAIM2/LFG2. Interacts with RTL10/BOP. Interacts (via a C-terminal 33 residues) with NOL3 (via CARD domain); inhibits BAX activation and translocation and consequently cytochrome c release from mitochondria. Interacts with GIMAP3/IAN4 and GIMAP5/IAN5; this interaction is increased, when cells initiate apoptosis upon IL2 withdrawal. Interacts with IRF3; the interaction is direct, increases upon Sendai virus infection and mediates the formation of the apoptosis complex TOMM70:HSP90AA1:IRF3:BAX. Interacts with MOAP1, facilitating BAX-dependent mitochondrial outer membrane permeabilization and apoptosis. Interacts with BCL2L10/BCL-B. Interacts with non-acetylated XRCC6/Ku70; this interaction leads to BAX sequestration in the cytosol, away from the mitochondria, preventing BAX-mediated apoptosis. Interacts with BCL2A1 and BCL2L1 isoform Bcl-X(L). In terms of assembly, (Microbial infection) Interacts with adenovirus E1B 19K protein; this interaction blocks BAX oligomerization. As to quaternary structure, (Microbial infection) Interacts with human cytomegalovirus/HHV-5 protein vMIA/UL37. (Microbial infection) Interacts with enterovirus protein 2B; this interaction activates BAX-induced apoptosis. In terms of processing, ubiquitinated in the absence of XRCC6/Ku70. Ubiquitination promotes protein degradation. Ubiquitinated on Lys-128 and Lys-190. 'Lys-63'-linked polyubiquitin chains on Lys-128 are removed by USP12. In terms of tissue distribution, expressed in a wide variety of tissues. Isoform Psi is found in glial tumors. Isoform Alpha is expressed in spleen, breast, ovary, testis, colon and brain, and at low levels in skin and lung. Isoform Sigma is expressed in spleen, breast, ovary, testis, lung, colon, brain and at low levels in skin. Isoform Alpha and isoform Sigma are expressed in pro-myelocytic leukemia, histiocytic lymphoma, Burkitt's lymphoma, T-cell lymphoma, lymphoblastic leukemia, breast adenocarcinoma, ovary adenocarcinoma, prostate carcinoma, prostate adenocarcinoma, lung carcinoma, epidermoid carcinoma, small cell lung carcinoma and colon adenocarcinoma cell lines.

Its subcellular location is the mitochondrion outer membrane. The protein localises to the cytoplasm. The protein resides in the nucleus. Plays a role in the mitochondrial apoptotic process. Under normal conditions, BAX is largely cytosolic via constant retrotranslocation from mitochondria to the cytosol mediated by BCL2L1/Bcl-xL, which avoids accumulation of toxic BAX levels at the mitochondrial outer membrane (MOM). Under stress conditions, undergoes a conformation change that causes translocation to the mitochondrion membrane, leading to the release of cytochrome c that then triggers apoptosis. Promotes activation of CASP3, and thereby apoptosis. The sequence is that of Apoptosis regulator BAX (BAX) from Homo sapiens (Human).